Consider the following 1004-residue polypeptide: DNA-directed RNA polymerase subunit beta' (1004 aa).

3 residues coordinate Mg(2+): Asp388, Asp390, and Asp392. Residues Cys757, Cys831, Cys838, and Cys841 each contribute to the Zn(2+) site.

Belongs to the RNA polymerase beta' chain family. In terms of assembly, the RNAP catalytic core consists of 2 alpha, 1 beta, 1 beta' and 1 omega subunit. When a sigma factor is associated with the core the holoenzyme is formed, which can initiate transcription. It depends on Mg(2+) as a cofactor. The cofactor is Zn(2+).

The enzyme catalyses RNA(n) + a ribonucleoside 5'-triphosphate = RNA(n+1) + diphosphate. DNA-dependent RNA polymerase catalyzes the transcription of DNA into RNA using the four ribonucleoside triphosphates as substrates. The polypeptide is DNA-directed RNA polymerase subunit beta' (Oenococcus oeni (Leuconostoc oenos)).